We begin with the raw amino-acid sequence, 176 residues long: Disulfide bond formation protein B (176 aa).

Over 1 to 14 (MLRFLNQCSQGRGA) the chain is Cytoplasmic. A helical transmembrane segment spans residues 15 to 31 (WLLMAFTALALELTALW). Residues 32 to 49 (FQHVMLLKPCVLCIYERC) lie on the Periplasmic side of the membrane. C41 and C44 form a disulfide bridge. A helical transmembrane segment spans residues 50–65 (ALFGVLGAALIGAIAP). The Cytoplasmic portion of the chain corresponds to 66–71 (KTPLRY). A helical transmembrane segment spans residues 72-89 (VAMVIWLYSAFRGVQLTY). Topologically, residues 90-144 (EHTMLQLYPSPFATCDFMVRFPEWLPLDKWVPQVFVASGDCAERQWDFLGMEMPQ) are periplasmic. C104 and C130 are joined by a disulfide. A helical transmembrane segment spans residues 145-163 (WLLGIFIAYLIVAVLVVIS). The Cytoplasmic segment spans residues 164-176 (QPFKAKKRDLFGR).

Belongs to the DsbB family.

The protein localises to the cell inner membrane. Functionally, required for disulfide bond formation in some periplasmic proteins such as PhoA or OmpA. Acts by oxidizing the DsbA protein. The sequence is that of Disulfide bond formation protein B from Shigella flexneri.